A 448-amino-acid chain; its full sequence is N-succinylarginine dihydrolase (448 aa).

Substrate-binding positions include 19-28 (GGLSYGNVAS), N110, and 137-138 (HR). The active site involves E174. Residue R214 coordinates substrate. The active site involves H250. Substrate is bound by residues D252 and N365. C371 functions as the Nucleophile in the catalytic mechanism.

The protein belongs to the succinylarginine dihydrolase family. In terms of assembly, homodimer.

It catalyses the reaction N(2)-succinyl-L-arginine + 2 H2O + 2 H(+) = N(2)-succinyl-L-ornithine + 2 NH4(+) + CO2. It participates in amino-acid degradation; L-arginine degradation via AST pathway; L-glutamate and succinate from L-arginine: step 2/5. Its function is as follows. Catalyzes the hydrolysis of N(2)-succinylarginine into N(2)-succinylornithine, ammonia and CO(2). The sequence is that of N-succinylarginine dihydrolase from Pseudomonas paraeruginosa (strain DSM 24068 / PA7) (Pseudomonas aeruginosa (strain PA7)).